A 68-amino-acid chain; its full sequence is Coiled-coil domain-containing protein 179 (68 aa).

Positions 11–68 are disordered; that stretch reads SQVNPEGPRQHHPSEVTERQLANKRIQNMQHLKKEKRRLNKRFSRPSPIPEPGLLWSS. Residues 18–28 show a composition bias toward basic and acidic residues; that stretch reads PRQHHPSEVTE. Residues 27-53 adopt a coiled-coil conformation; the sequence is TERQLANKRIQNMQHLKKEKRRLNKRF. The segment covering 41–54 has biased composition (basic residues); sequence HLKKEKRRLNKRFS.

This is Coiled-coil domain-containing protein 179 (CCDC179) from Homo sapiens (Human).